A 480-amino-acid chain; its full sequence is uncharacterized protein (480 aa).

A helical transmembrane segment spans residues 7–28 (HVISIFETFGAYFINIFYNFLY). Asparagine 73 and asparagine 195 each carry an N-linked (GlcNAc...) asparagine; by host glycan. Positions 195 to 235 (NRSLLYQIEELTSEKKSLLAELSTLRKKYEKRQSEYRRLVQ) form a coiled coil. The tract at residues 297 to 332 (ELTSKSPSNYPVPQSRTIVSKPSDNYPVPQSRSSKI) is disordered. The segment covering 301–329 (KSPSNYPVPQSRTIVSKPSDNYPVPQSRS) has biased composition (polar residues). Asparagine 455 carries N-linked (GlcNAc...) asparagine; by host glycosylation.

This sequence belongs to the asfivirus B475L family.

It is found in the host membrane. This is an uncharacterized protein from African swine fever virus (isolate Pig/Kenya/KEN-50/1950) (ASFV).